The sequence spans 305 residues: N-acetylglucosamine-1-phosphotransferase subunit gamma (305 aa).

An N-terminal signal peptide occupies residues 1–24; that stretch reads MAAGLARLLLLLGLSAGGPAPAGA. One can recognise an MRH domain in the interval 69-171; it reads GKCFSLVEST…TFETPLVCHP (103 aa). An intrachain disulfide couples Cys-71 to Cys-84. 2 N-linked (GlcNAc...) asparagine glycosylation sites follow: Asn-88 and Asn-115. Intrachain disulfides connect Cys-129/Cys-157 and Cys-142/Cys-169. Residues 176 to 279 form the DMAP1-binding domain; the sequence is VYPTLPEALQ…YTRPTETSNL (104 aa). Residues 267-305 form a disordered region; the sequence is GIPYTRPTETSNLEHLGHETPRAKSPEQLRGDPGLRGSL. Residues 281-296 are compositionally biased toward basic and acidic residues; it reads HLGHETPRAKSPEQLR.

Homodimer; disulfide-linked. Hexamer of two alpha (GNPTAB), two beta (GNPTAB) and two gamma (GNPTG) subunits; disulfide-linked. The alpha and/or the beta subunits of the enzyme constitute the catalytic subunits. In terms of processing, cys-245 mediates the formation of the interchain disulfide bond for formation of the homodimer. Cys-142, Cys-157 and Cys-169 are involved in intramolecular disulfide bonds formation. In terms of tissue distribution, widely expressed.

The protein resides in the secreted. It localises to the golgi apparatus. Its function is as follows. Non-catalytic subunit of the N-acetylglucosamine-1-phosphotransferase complex, an enzyme that catalyzes the formation of mannose 6-phosphate (M6P) markers on high mannose type oligosaccharides in the Golgi apparatus. Binds and presents the high mannose glycans of the acceptor to the catalytic alpha and beta subunits (GNPTAB). Enhances the rate of N-acetylglucosamine-1-phosphate transfer to the oligosaccharides of acid hydrolase acceptors. The protein is N-acetylglucosamine-1-phosphotransferase subunit gamma (GNPTG) of Homo sapiens (Human).